The chain runs to 279 residues: 3-methyl-2-oxobutanoate hydroxymethyltransferase (279 aa).

2 residues coordinate Mg(2+): Asp43 and Asp82. Residues 43-44, Asp82, and Lys112 each bind 3-methyl-2-oxobutanoate; that span reads DS. Residue Glu114 participates in Mg(2+) binding. The active-site Proton acceptor is the Glu181.

This sequence belongs to the PanB family. As to quaternary structure, homodecamer; pentamer of dimers. Mg(2+) serves as cofactor.

It localises to the cytoplasm. It catalyses the reaction 3-methyl-2-oxobutanoate + (6R)-5,10-methylene-5,6,7,8-tetrahydrofolate + H2O = 2-dehydropantoate + (6S)-5,6,7,8-tetrahydrofolate. The protein operates within cofactor biosynthesis; (R)-pantothenate biosynthesis; (R)-pantoate from 3-methyl-2-oxobutanoate: step 1/2. Catalyzes the reversible reaction in which hydroxymethyl group from 5,10-methylenetetrahydrofolate is transferred onto alpha-ketoisovalerate to form ketopantoate. The protein is 3-methyl-2-oxobutanoate hydroxymethyltransferase of Geobacillus kaustophilus (strain HTA426).